We begin with the raw amino-acid sequence, 394 residues long: ATP phosphoribosyltransferase regulatory subunit (394 aa).

Belongs to the class-II aminoacyl-tRNA synthetase family. HisZ subfamily. In terms of assembly, heteromultimer composed of HisG and HisZ subunits.

It localises to the cytoplasm. The protein operates within amino-acid biosynthesis; L-histidine biosynthesis; L-histidine from 5-phospho-alpha-D-ribose 1-diphosphate: step 1/9. Required for the first step of histidine biosynthesis. May allow the feedback regulation of ATP phosphoribosyltransferase activity by histidine. This Geobacillus kaustophilus (strain HTA426) protein is ATP phosphoribosyltransferase regulatory subunit.